The chain runs to 547 residues: Elongator complex protein 3 (547 aa).

Positions 82–372 (RTASGIAVVA…YRVQRDIPMP (291 aa)) constitute a Radical SAM core domain. Positions 99, 109, and 112 each coordinate [4Fe-4S] cluster. S161 is subject to Phosphoserine. K164 is an acetyl-CoA binding site. Y202 carries the post-translational modification Phosphotyrosine; by ALK. K229 carries the N6-methyllysine modification. Y251 is subject to Phosphotyrosine. The region spanning 396-547 (IQCRDVRTRE…QGPYMVKMLK (152 aa)) is the N-acetyltransferase domain. Acetyl-CoA is bound by residues 474–477 (ELHV), 497–499 (FGM), and Y530.

It belongs to the ELP3 family. As to quaternary structure, component of the elongator complex which consists of ELP1, ELP2, ELP3, ELP4, ELP5 and ELP6. ELP1, ELP2 and ELP3 form the elongator core complex. Interacts with alpha-tubulin. Requires [4Fe-4S] cluster as cofactor. Post-translationally, tyrosine-phosphorylated; phosphorylation on Tyr-202 does not affect elongator complex integrity or ELP3 protein stability. Also serine/threonine-phosphorylated. As to expression, expressed in the cerebellum and spinal motor neurons.

The protein resides in the cytoplasm. The protein localises to the nucleus. The enzyme catalyses uridine(34) in tRNA + acetyl-CoA + S-adenosyl-L-methionine + H2O = 5-(carboxymethyl)uridine(34) in tRNA + 5'-deoxyadenosine + L-methionine + CoA + 2 H(+). It functions in the pathway tRNA modification; 5-methoxycarbonylmethyl-2-thiouridine-tRNA biosynthesis. Its function is as follows. Catalytic tRNA acetyltransferase subunit of the elongator complex which is required for multiple tRNA modifications, including mcm5U (5-methoxycarbonylmethyl uridine), mcm5s2U (5-methoxycarbonylmethyl-2-thiouridine), and ncm5U (5-carbamoylmethyl uridine). In the elongator complex, acts as a tRNA uridine(34) acetyltransferase by mediating formation of carboxymethyluridine in the wobble base at position 34 in tRNAs. May also act as a protein lysine acetyltransferase by mediating acetylation of target proteins; such activity is however unclear in vivo and recent evidences suggest that ELP3 primarily acts as a tRNA acetyltransferase. Involved in neurogenesis: regulates the migration and branching of projection neurons in the developing cerebral cortex, through a process depending on alpha-tubulin acetylation. Required for acetylation of GJA1 in the developing cerebral cortex. The sequence is that of Elongator complex protein 3 from Homo sapiens (Human).